The following is an 87-amino-acid chain: MKSNKVTFFLGLFLVSAFCVRLTENMCFKDDDCINQGEWCPVLRVCSYAECICPWGTRSKLPSCQIICAHLDKKSVNSYNPCGCNYK.

The first 19 residues, 1–19, serve as a signal peptide directing secretion; it reads MKSNKVTFFLGLFLVSAFC. Intrachain disulfides connect Cys27-Cys46, Cys33-Cys51, and Cys40-Cys53.

The protein belongs to the DEFL family.

It is found in the secreted. This chain is Putative defensin-like protein 304, found in Arabidopsis thaliana (Mouse-ear cress).